The following is a 118-amino-acid chain: MLKEYLGISLFLAAGLIIPFLAFAVSRLLQTRKNSLVKGEPYECGMETIGDTWIQFKSNYFLYALVFVAFDVETVFLYPWAVKFQQLGTFAIVEMFIFITILVVGFWYAWKEGALEWK.

The next 3 helical transmembrane spans lie at 5-25 (YLGISLFLAAGLIIPFLAFAV), 61-81 (FLYALVFVAFDVETVFLYPWA), and 90-110 (FAIVEMFIFITILVVGFWYAW).

The protein belongs to the complex I subunit 3 family. As to quaternary structure, NDH-1 is composed of 14 different subunits. Subunits NuoA, H, J, K, L, M, N constitute the membrane sector of the complex.

It localises to the cell membrane. It catalyses the reaction a quinone + NADH + 5 H(+)(in) = a quinol + NAD(+) + 4 H(+)(out). Functionally, NDH-1 shuttles electrons from NADH, via FMN and iron-sulfur (Fe-S) centers, to quinones in the respiratory chain. The immediate electron acceptor for the enzyme in this species is believed to be a menaquinone. Couples the redox reaction to proton translocation (for every two electrons transferred, four hydrogen ions are translocated across the cytoplasmic membrane), and thus conserves the redox energy in a proton gradient. The protein is NADH-quinone oxidoreductase subunit A of Heliobacterium modesticaldum (strain ATCC 51547 / Ice1).